Consider the following 258-residue polypeptide: Thiazole synthase (258 aa).

The active-site Schiff-base intermediate with DXP is the K96. 1-deoxy-D-xylulose 5-phosphate-binding positions include G157, 183 to 184, and 205 to 206; these read AG and NT.

The protein belongs to the ThiG family. As to quaternary structure, homotetramer. Forms heterodimers with either ThiH or ThiS.

Its subcellular location is the cytoplasm. It catalyses the reaction [ThiS sulfur-carrier protein]-C-terminal-Gly-aminoethanethioate + 2-iminoacetate + 1-deoxy-D-xylulose 5-phosphate = [ThiS sulfur-carrier protein]-C-terminal Gly-Gly + 2-[(2R,5Z)-2-carboxy-4-methylthiazol-5(2H)-ylidene]ethyl phosphate + 2 H2O + H(+). Its pathway is cofactor biosynthesis; thiamine diphosphate biosynthesis. Functionally, catalyzes the rearrangement of 1-deoxy-D-xylulose 5-phosphate (DXP) to produce the thiazole phosphate moiety of thiamine. Sulfur is provided by the thiocarboxylate moiety of the carrier protein ThiS. In vitro, sulfur can be provided by H(2)S. This chain is Thiazole synthase, found in Alkaliphilus metalliredigens (strain QYMF).